A 430-amino-acid chain; its full sequence is Protein translocase subunit SecY (430 aa).

The next 10 helical transmembrane spans lie at 18–38 (IFFT…PAPG), 68–88 (FSIF…MQLL), 117–137 (LAIS…NNYL), 147–167 (IMSY…LIWL), 179–199 (GISI…LIQF), 217–237 (VLGL…VLEA), 269–289 (GVIP…LTLF), 308–328 (NVGM…YAFV), 368–388 (FVGS…TKFM), and 389–409 (GLPQ…GVAI).

Belongs to the SecY/SEC61-alpha family. As to quaternary structure, component of the Sec protein translocase complex. Heterotrimer consisting of SecY, SecE and SecG subunits. The heterotrimers can form oligomers, although 1 heterotrimer is thought to be able to translocate proteins. Interacts with the ribosome. Interacts with SecDF, and other proteins may be involved. Interacts with SecA.

The protein localises to the cell membrane. The central subunit of the protein translocation channel SecYEG. Consists of two halves formed by TMs 1-5 and 6-10. These two domains form a lateral gate at the front which open onto the bilayer between TMs 2 and 7, and are clamped together by SecE at the back. The channel is closed by both a pore ring composed of hydrophobic SecY resides and a short helix (helix 2A) on the extracellular side of the membrane which forms a plug. The plug probably moves laterally to allow the channel to open. The ring and the pore may move independently. The chain is Protein translocase subunit SecY from Staphylococcus aureus (strain NCTC 8325 / PS 47).